The sequence spans 287 residues: Troponin T, cardiac muscle (287 aa).

Composition is skewed to acidic residues over residues methionine 1–glycine 31 and glutamate 44–valine 59. 2 disordered regions span residues methionine 1 to valine 85 and lysine 124 to lysine 208. N-acetylserine is present on serine 2. Serine 2 is modified (phosphoserine; by CK2). Over residues alanine 66–isoleucine 79 the composition is skewed to pro residues. 2 stretches are compositionally biased toward basic and acidic residues: residues lysine 124–arginine 173 and glutamine 192–lysine 208. Serine 197 is modified (phosphoserine; by PKC/PRKCA). A Phosphothreonine; by PKC/PRKCA and RAF1 modification is found at threonine 202. The residue at position 283 (threonine 283) is a Phosphothreonine; by PKC/PRKCA.

It belongs to the troponin T family. Post-translationally, phosphorylation at Thr-202 by PRKCA induces significant reduction in myofilament calcium sensitivity and actomyosin ATPase activity.

Its function is as follows. Troponin T is the tropomyosin-binding subunit of troponin, the thin filament regulatory complex which confers calcium-sensitivity to striated muscle actomyosin ATPase activity. The protein is Troponin T, cardiac muscle (TNNT2) of Ovis aries (Sheep).